The following is an 860-amino-acid chain: Leucine--tRNA ligase (860 aa).

Positions 42–52 match the 'HIGH' region motif; it reads PYPSGRLHMGH. A 'KMSKS' region motif is present at residues 619-623; sequence KMSKS. Lys622 contributes to the ATP binding site.

It belongs to the class-I aminoacyl-tRNA synthetase family.

Its subcellular location is the cytoplasm. The catalysed reaction is tRNA(Leu) + L-leucine + ATP = L-leucyl-tRNA(Leu) + AMP + diphosphate. In Yersinia pseudotuberculosis serotype I (strain IP32953), this protein is Leucine--tRNA ligase.